Consider the following 175-residue polypeptide: Glutamyl-tRNA(Gln) amidotransferase subunit C, mitochondrial (175 aa).

Belongs to the GatC family. Subunit of the heterotrimeric GatCAB amidotransferase (AdT) complex, composed of A, B and C subunits.

It localises to the mitochondrion. It carries out the reaction L-glutamyl-tRNA(Gln) + L-glutamine + ATP + H2O = L-glutaminyl-tRNA(Gln) + L-glutamate + ADP + phosphate + H(+). Allows the formation of correctly charged Gln-tRNA(Gln) through the transamidation of misacylated Glu-tRNA(Gln) in the mitochondria. The reaction takes place in the presence of glutamine and ATP through an activated gamma-phospho-Glu-tRNA(Gln). The chain is Glutamyl-tRNA(Gln) amidotransferase subunit C, mitochondrial from Caenorhabditis elegans.